We begin with the raw amino-acid sequence, 336 residues long: Phosphate acyltransferase (336 aa).

The protein belongs to the PlsX family. Homodimer. Probably interacts with PlsY.

Its subcellular location is the cytoplasm. The catalysed reaction is a fatty acyl-[ACP] + phosphate = an acyl phosphate + holo-[ACP]. Its pathway is lipid metabolism; phospholipid metabolism. Functionally, catalyzes the reversible formation of acyl-phosphate (acyl-PO(4)) from acyl-[acyl-carrier-protein] (acyl-ACP). This enzyme utilizes acyl-ACP as fatty acyl donor, but not acyl-CoA. The sequence is that of Phosphate acyltransferase from Dictyoglomus turgidum (strain DSM 6724 / Z-1310).